We begin with the raw amino-acid sequence, 292 residues long: Ribosomal protein L11 methyltransferase (292 aa).

S-adenosyl-L-methionine contacts are provided by threonine 144, glycine 165, aspartate 187, and asparagine 229.

The protein belongs to the methyltransferase superfamily. PrmA family.

The protein resides in the cytoplasm. It carries out the reaction L-lysyl-[protein] + 3 S-adenosyl-L-methionine = N(6),N(6),N(6)-trimethyl-L-lysyl-[protein] + 3 S-adenosyl-L-homocysteine + 3 H(+). Its function is as follows. Methylates ribosomal protein L11. This chain is Ribosomal protein L11 methyltransferase, found in Pseudomonas fluorescens (strain Pf0-1).